Reading from the N-terminus, the 345-residue chain is uncharacterized protein (345 aa).

PDZ GRASP-type domains are found at residues 27 to 112 and 118 to 207; these read CGFR…WASI and AIWH…HGVL. Residues 27-223 form a GRASP region; that stretch reads CGFRVLKVEN…LSGPPPQPGD (197 aa). A disordered region spans residues 229–345; sequence PMLGGPDHKV…APQNEELVKN (117 aa). Positions 297 to 308 are enriched in basic and acidic residues; sequence KLSRELDHKTKD. Polar residues-rich tracts occupy residues 309–318 and 328–338; these read ASSTNDSQTT and VNSTNDESAPQ.

The protein resides in the golgi apparatus membrane. This is an uncharacterized protein from Schizosaccharomyces pombe (strain 972 / ATCC 24843) (Fission yeast).